The following is a 645-amino-acid chain: Leucine-rich repeat protein soc-2 homolog (645 aa).

The span at 1–19 (MNLCSSGATASTTSLSSTG) shows a compositional bias: low complexity. 2 disordered regions span residues 1-67 (MNLC…AGGS) and 83-151 (NSPA…IQAD). Gly residues-rich tracts occupy residues 26–49 (GVPG…GGGS) and 88–97 (GAGGASGSTG). The segment covering 98–107 (SGQQPTGSNG) has biased composition (low complexity). LRR repeat units lie at residues 165–186 (GIKR…VKEC), 188–209 (HLTE…IGCL), 211–232 (SLRN…LQNC), 234–255 (QLKV…IYRL), 257–278 (SLTT…LRQL), 280–301 (NLTM…IGAL), 303–324 (NLTT…IGNC), 326–347 (NLSA…IGNL), 349–371 (SLVR…KNCK), 372–393 (SMDE…MLAS), 396–417 (GLTT…GPAQ), 420–441 (NVYS…IFSR), 444–465 (GLTK…IGTW), 467–488 (NMVE…IMNL), 490–511 (NLEI…IGNL), 513–534 (RLRI…IGLL), 536–557 (ELQR…IGHL), 559–580 (NLTH…IGSL), 582–604 (SLEN…LALC), and 606–627 (NLKY…IQAG).

This sequence belongs to the SHOC2 family.

Acts as a Ras effector and participates in MAPK pathway activation. Probably acts as a regulatory subunit of protein phosphatase that specifically dephosphorylates Raf kinase and stimulate Raf activity at specialized signaling complexes upon Ras activation. This is Leucine-rich repeat protein soc-2 homolog (Sur-8) from Drosophila yakuba (Fruit fly).